Here is a 124-residue protein sequence, read N- to C-terminus: Aspartate 1-decarboxylase (124 aa).

The active-site Schiff-base intermediate with substrate; via pyruvic acid is the Ser-25. The residue at position 25 (Ser-25) is a Pyruvic acid (Ser). Thr-57 is a binding site for substrate. The active-site Proton donor is the Tyr-58. 73 to 75 (GAA) provides a ligand contact to substrate.

The protein belongs to the PanD family. Heterooctamer of four alpha and four beta subunits. Pyruvate serves as cofactor. In terms of processing, is synthesized initially as an inactive proenzyme, which is activated by self-cleavage at a specific serine bond to produce a beta-subunit with a hydroxyl group at its C-terminus and an alpha-subunit with a pyruvoyl group at its N-terminus.

Its subcellular location is the cytoplasm. The catalysed reaction is L-aspartate + H(+) = beta-alanine + CO2. It functions in the pathway cofactor biosynthesis; (R)-pantothenate biosynthesis; beta-alanine from L-aspartate: step 1/1. Catalyzes the pyruvoyl-dependent decarboxylation of aspartate to produce beta-alanine. This chain is Aspartate 1-decarboxylase, found in Clostridium beijerinckii (strain ATCC 51743 / NCIMB 8052) (Clostridium acetobutylicum).